Here is a 325-residue protein sequence, read N- to C-terminus: Replication factor C small subunit (325 aa).

44–51 (GPPGTGKT) is an ATP binding site.

The protein belongs to the activator 1 small subunits family. RfcS subfamily. In terms of assembly, heteromultimer composed of small subunits (RfcS) and large subunits (RfcL).

Functionally, part of the RFC clamp loader complex which loads the PCNA sliding clamp onto DNA. The sequence is that of Replication factor C small subunit from Thermofilum pendens (strain DSM 2475 / Hrk 5).